Reading from the N-terminus, the 556-residue chain is MKSDIEIAQSVPLKPITEIVKKVGIDADDLELYGNYKAKLSFEKIKSVEDNKPGKLILVTAINPTPAGEGKSTMSIGLADALTKIGKKTMLALREPSLGPVMGIKGGAAGGGYAQVLPMEDINLHFTGDMHAITTAHNALSALIDNHLQQGNELGIDPRRIIWKRVLDLNDRSLRQVIVGLGSPVNGVPREDGFDITVASEVMAILCLATDLKDLKARLANIVIAYRYDKSPVYVRDLKVEGALALILKDAIKPNLVQTIYGTPAFVHGGPFANIAHGCNSVLATSTALRLADYTVTEAGFGADLGAEKFLNIKTPNLPKAPDAVVIVATLRALKMHGGVAKADLTFENTAAVRSGFANLKRHVENIRKFNIPIVVAINEFVTDTKAEIQVLKELCAEIAVPVELASVWAKGADGGIALANAVVKAITEESAAYKRLYADKDSLEEKLKAIVTEIYGGRAVQFGPKAKNQLKQFAQFGWDQLPVCMAKTQYSFSDDPSLLGAPDQFDITIRELVPKTGAGFIVALTGDVMTMPGLPKIPAAMKMDVTEDGTAVGLF.

Position 65-72 (65-72 (TPAGEGKS)) interacts with ATP.

This sequence belongs to the formate--tetrahydrofolate ligase family.

The catalysed reaction is (6S)-5,6,7,8-tetrahydrofolate + formate + ATP = (6R)-10-formyltetrahydrofolate + ADP + phosphate. It participates in one-carbon metabolism; tetrahydrofolate interconversion. The protein is Formate--tetrahydrofolate ligase of Streptococcus equi subsp. equi (strain 4047).